A 291-amino-acid polypeptide reads, in one-letter code: Phosphatidylserine decarboxylase proenzyme 2 (291 aa).

Active-site charge relay system; for autoendoproteolytic cleavage activity residues include aspartate 112 and serine 251. Serine 251 serves as the catalytic Schiff-base intermediate with substrate; via pyruvic acid; for decarboxylase activity. Residue serine 251 is modified to Pyruvic acid (Ser); by autocatalysis.

It belongs to the phosphatidylserine decarboxylase family. PSD-B subfamily. Prokaryotic type II sub-subfamily. In terms of assembly, heterodimer of a large membrane-associated beta subunit and a small pyruvoyl-containing alpha subunit. Pyruvate is required as a cofactor. In terms of processing, is synthesized initially as an inactive proenzyme. Formation of the active enzyme involves a self-maturation process in which the active site pyruvoyl group is generated from an internal serine residue via an autocatalytic post-translational modification. Two non-identical subunits are generated from the proenzyme in this reaction, and the pyruvate is formed at the N-terminus of the alpha chain, which is derived from the carboxyl end of the proenzyme. The autoendoproteolytic cleavage occurs by a canonical serine protease mechanism, in which the side chain hydroxyl group of the serine supplies its oxygen atom to form the C-terminus of the beta chain, while the remainder of the serine residue undergoes an oxidative deamination to produce ammonia and the pyruvoyl prosthetic group on the alpha chain. During this reaction, the Ser that is part of the protease active site of the proenzyme becomes the pyruvoyl prosthetic group, which constitutes an essential element of the active site of the mature decarboxylase.

It is found in the cell membrane. The catalysed reaction is a 1,2-diacyl-sn-glycero-3-phospho-L-serine + H(+) = a 1,2-diacyl-sn-glycero-3-phosphoethanolamine + CO2. It functions in the pathway phospholipid metabolism; phosphatidylethanolamine biosynthesis; phosphatidylethanolamine from CDP-diacylglycerol: step 2/2. Functionally, catalyzes the formation of phosphatidylethanolamine (PtdEtn) from phosphatidylserine (PtdSer). This is Phosphatidylserine decarboxylase proenzyme 2 from Clostridium acetobutylicum (strain ATCC 824 / DSM 792 / JCM 1419 / IAM 19013 / LMG 5710 / NBRC 13948 / NRRL B-527 / VKM B-1787 / 2291 / W).